Here is a 141-residue protein sequence, read N- to C-terminus: Pancreatic progenitor cell differentiation and proliferation factor-like protein (141 aa).

Positions 72-141 are disordered; the sequence is DQSACGGNGP…GAPKDTNSPQ (70 aa). The span at 95–105 shows a compositional bias: low complexity; the sequence is SLLQQEESQLL. A compositionally biased stretch (polar residues) spans 112–122; it reads GTVNRFRNSQT.

Belongs to the PPDPF family.

The polypeptide is Pancreatic progenitor cell differentiation and proliferation factor-like protein (Bos taurus (Bovine)).